Here is a 279-residue protein sequence, read N- to C-terminus: Oxygen-dependent coproporphyrinogen-III oxidase (279 aa).

Ser-102 contacts substrate. Positions 106 and 116 each coordinate a divalent metal cation. His-116 (proton donor) is an active-site residue. 118 to 120 lines the substrate pocket; that stretch reads NTR. His-149 and His-179 together coordinate a divalent metal cation. The important for dimerization stretch occupies residues 244–279; that stretch reads YVEFNLLYDRGTKFGLMTDGNVEAILMSLPPEVKFN.

This sequence belongs to the aerobic coproporphyrinogen-III oxidase family. In terms of assembly, homodimer. The cofactor is a divalent metal cation.

The protein resides in the cytoplasm. It catalyses the reaction coproporphyrinogen III + O2 + 2 H(+) = protoporphyrinogen IX + 2 CO2 + 2 H2O. It functions in the pathway porphyrin-containing compound metabolism; protoporphyrin-IX biosynthesis; protoporphyrinogen-IX from coproporphyrinogen-III (O2 route): step 1/1. Involved in the heme biosynthesis. Catalyzes the aerobic oxidative decarboxylation of propionate groups of rings A and B of coproporphyrinogen-III to yield the vinyl groups in protoporphyrinogen-IX. The chain is Oxygen-dependent coproporphyrinogen-III oxidase from Rickettsia rickettsii (strain Iowa).